Here is a 441-residue protein sequence, read N- to C-terminus: MSANGPSHPARELKAGGSLSGHVKVPGDKSISHRSLLFGAIAEGTTTIDGLLPAEDPISTAACLRAMGVLISPIEAAGLVTVEGVGLDGLQEPAEILDCGNSGTTMRLMLGLLAGRAGRHFVLDGDASLRRRPMRRVGQPLASMGADVRGRDGGNLAPLAVQGQSLRGTVIGTPVASAQVKSALLLAALTADGTTTVIEPAQSRDHSERMLRAFGADLQVGGEMGRHITVRPGNTLKGQQVVVPGDISSAAFWLVAGALVPGADLTIENVGLNPTRTGILEVLEQMNAQIEVLNRRDVAGEPVGDLRITHGPLQPFSIGEEIMPRLVDEVPILSVAACFCDGESRISGASELRVKETDRLAVMARQLKAMGAEIEEHEDGMTIHGGRPLKGAALDSETDHRVAMSLAVASLLASGDSTLQRSDAAAVSYPSFWDDLDRLRC.

The disordered stretch occupies residues 1–21 (MSANGPSHPARELKAGGSLSG). Lys-29, Ser-30, and Arg-34 together coordinate 3-phosphoshikimate. Residue Lys-29 coordinates phosphoenolpyruvate. 2 residues coordinate phosphoenolpyruvate: Gly-103 and Arg-132. Residues Ser-177, Gln-179, Asp-328, and Lys-355 each contribute to the 3-phosphoshikimate site. Gln-179 contributes to the phosphoenolpyruvate binding site. The active-site Proton acceptor is the Asp-328. Phosphoenolpyruvate is bound by residues Arg-359 and Arg-401.

The protein belongs to the EPSP synthase family. Monomer.

It localises to the cytoplasm. It catalyses the reaction 3-phosphoshikimate + phosphoenolpyruvate = 5-O-(1-carboxyvinyl)-3-phosphoshikimate + phosphate. It functions in the pathway metabolic intermediate biosynthesis; chorismate biosynthesis; chorismate from D-erythrose 4-phosphate and phosphoenolpyruvate: step 6/7. Its function is as follows. Catalyzes the transfer of the enolpyruvyl moiety of phosphoenolpyruvate (PEP) to the 5-hydroxyl of shikimate-3-phosphate (S3P) to produce enolpyruvyl shikimate-3-phosphate and inorganic phosphate. This Parasynechococcus marenigrum (strain WH8102) protein is 3-phosphoshikimate 1-carboxyvinyltransferase.